The chain runs to 388 residues: Phosphopentomutase (388 aa).

6 residues coordinate Mn(2+): D11, D283, H288, D324, H325, and H336.

It belongs to the phosphopentomutase family. Requires Mn(2+) as cofactor.

The protein localises to the cytoplasm. It carries out the reaction 2-deoxy-alpha-D-ribose 1-phosphate = 2-deoxy-D-ribose 5-phosphate. It catalyses the reaction alpha-D-ribose 1-phosphate = D-ribose 5-phosphate. Its pathway is carbohydrate degradation; 2-deoxy-D-ribose 1-phosphate degradation; D-glyceraldehyde 3-phosphate and acetaldehyde from 2-deoxy-alpha-D-ribose 1-phosphate: step 1/2. Functionally, isomerase that catalyzes the conversion of deoxy-ribose 1-phosphate (dRib-1-P) and ribose 1-phosphate (Rib-1-P) to deoxy-ribose 5-phosphate (dRib-5-P) and ribose 5-phosphate (Rib-5-P), respectively. The protein is Phosphopentomutase of Enterococcus faecalis (strain ATCC 700802 / V583).